Consider the following 122-residue polypeptide: MRHYEIVFMVHPDQSEQVAGMIERYTGSITEAGGKIHRLEDWGRRQLAYPINKLHKAHYVLMNVEADQAVVDELETAFRFNDAVLRNMIMRTKAAITEPSIMLKAREERVKRDEMKFDADVE.

This sequence belongs to the bacterial ribosomal protein bS6 family.

Binds together with bS18 to 16S ribosomal RNA. The polypeptide is Small ribosomal subunit protein bS6 (Vibrio cholerae serotype O1 (strain ATCC 39541 / Classical Ogawa 395 / O395)).